The following is a 143-amino-acid chain: Spliceosomal protein DIB1 (143 aa).

An N-acetylalanine modification is found at alanine 2.

This sequence belongs to the DIM1 family. In terms of assembly, component of the U4/U6-U5 tri-snRNP complex composed of the U4, U6 and U5 snRNAs and at least PRP3, PRP4, PRP6, PRP8, PRP18, PRP31, PRP38, SNU13, SNU23, SNU66, SNU114, SPP381, SMB1, SMD1, SMD2, SMD3, SMX2, SMX3, LSM2, LSM3, LSM4, LSM5, LSM6, LSM7, LSM8, BRR2 and DIB1.

It is found in the nucleus. In terms of biological role, essential role in pre-mRNA splicing. Also essential for entry into mitosis (G2/M progression) as well as for chromosome segregation during mitosis. This Saccharomyces cerevisiae (strain ATCC 204508 / S288c) (Baker's yeast) protein is Spliceosomal protein DIB1 (DIB1).